An 86-amino-acid polypeptide reads, in one-letter code: RNA-binding protein Hfq (86 aa).

A Sm domain is found at 9–69 (DRFLNILRTS…VSTIMPESFV (61 aa)).

This sequence belongs to the Hfq family. Homohexamer.

Its function is as follows. RNA chaperone that binds small regulatory RNA (sRNAs) and mRNAs to facilitate mRNA translational regulation in response to envelope stress, environmental stress and changes in metabolite concentrations. Also binds with high specificity to tRNAs. The sequence is that of RNA-binding protein Hfq from Thermosipho melanesiensis (strain DSM 12029 / CIP 104789 / BI429).